The sequence spans 97 residues: Small cell adhesion glycoprotein (97 aa).

At 1-36 the chain is on the extracellular side; sequence MTSFPTTPPPAEELMATTILQATEALSPEAEASTAL. Thr-2 carries O-linked (GalNAc...) threonine glycosylation. An O-linked (GalNAc...) serine glycan is attached at Ser-3. O-linked (GalNAc...) threonine glycans are attached at residues Thr-6, Thr-7, Thr-17, Thr-18, and Thr-23. Residues 37–57 form a helical; Signal-anchor for type III membrane protein membrane-spanning segment; that stretch reads IAVVITVVFLTLLSVVILIFF. Residues 58–97 lie on the Cytoplasmic side of the membrane; that stretch reads YLYKNKGSYVTYEPADGEPGAVVLMENDSAKGREKEEYFI.

Belongs to the SMAGP family. In terms of processing, O-glycosylated. The O-glycan is modified with sialic acid residues.

The protein localises to the cell membrane. It localises to the cytoplasmic vesicle membrane. Functionally, may play a role in epithelial cell-cell contacts. May play a role in tumor invasiveness and metastasis formation. The sequence is that of Small cell adhesion glycoprotein (SMAGP) from Bos taurus (Bovine).